The following is an 864-amino-acid chain: Leucine--tRNA ligase (864 aa).

The 'HIGH' region motif lies at 42–52 (PYPSGKLHMGH). Residues 624 to 628 (KMSKS) carry the 'KMSKS' region motif. An ATP-binding site is contributed by K627.

It belongs to the class-I aminoacyl-tRNA synthetase family.

Its subcellular location is the cytoplasm. The catalysed reaction is tRNA(Leu) + L-leucine + ATP = L-leucyl-tRNA(Leu) + AMP + diphosphate. The sequence is that of Leucine--tRNA ligase from Burkholderia vietnamiensis (strain G4 / LMG 22486) (Burkholderia cepacia (strain R1808)).